We begin with the raw amino-acid sequence, 1475 residues long: Protein Shroom4 (1475 aa).

In terms of domain architecture, PDZ spans 10–92 (YVPVQLQGGA…ILKLIVRRRN (83 aa)). Disordered stretches follow at residues 151 to 175 (EKSSSIGSMESLEQPGQPTYEGHLL) and 202 to 321 (CALS…PPRS). A compositionally biased stretch (polar residues) spans 249 to 258 (TSTSHASSYS). Positions 294–312 (EQHRASEPVDSLPQKEKPG) are enriched in basic and acidic residues. Residue S412 is modified to Phosphoserine. Disordered stretches follow at residues 432-523 (SKGM…PSAT), 542-577 (HTEASEEGDNEPKECGRLGGRRSGGPRGRSIQNRRR), 610-644 (NEAVEETQEPPESPPLSASNASLLPSYKNVPSPGD), and 658-688 (SECLSQASESSKARGGVEGRMSPGQRSGQSS). Positions 471 to 485 (QTRKERKTTPLDDKL) are enriched in basic and acidic residues. The segment covering 513-523 (SDLTSQQPSAT) has biased composition (polar residues). The span at 542-557 (HTEASEEGDNEPKECG) shows a compositional bias: basic and acidic residues. Gly residues predominate over residues 558-568 (RLGGRRSGGPR). Low complexity-rich tracts occupy residues 624-635 (PLSASNASLLPS) and 658-667 (SECLSQASES). S722 carries the post-translational modification Phosphoserine. Polar residues-rich tracts occupy residues 727–738 (AQPQVALSTEAP) and 775–791 (KSLSTSHLPGLTTHNNK). Disordered stretches follow at residues 727 to 753 (AQPQVALSTEAPSNPDDSKELKTSTPQ) and 772 to 791 (ESSKSLSTSHLPGLTTHNNK). S1010 is subject to Phosphoserine. 2 disordered regions span residues 1022–1041 (SNKPEESSVYEDENSVASMP) and 1055–1185 (SLEP…QSLQ). Residues 1090–1099 (FPPPRPPPPN) are compositionally biased toward pro residues. Residues 1110–1125 (QLQQQQQQQQQQQQQQ) are compositionally biased toward low complexity. Acidic residues predominate over residues 1128–1145 (EEEEEKEQEEEGEKEEDL). Residues 1149 to 1168 (YFSSELTGSCAPNTEEQPQS) are compositionally biased toward polar residues. The region spanning 1190-1469 (FALHPSNFVP…QLKCLKESLH (280 aa)) is the ASD2 domain. A coiled-coil region spans residues 1380-1470 (SESNQEKLVL…LKCLKESLHL (91 aa)).

It belongs to the shroom family. Interacts directly with F-actin. As to expression, detected in most adult tissues examined. Expressed in brain, lung, heart, liver, kidney, muscle and ovary. Expressed throughout the brain, with high expression in the brain stem and cerebellum and weaker expression in the hypothalamus, the hippocampus and the olfactory bulb. Expressed in wide range of cell types during development, including vascular endothelium and the polarized epithelium of the neural tube and kidney.

It is found in the cytoplasm. Its subcellular location is the cytoskeleton. Functionally, probable regulator of cytoskeletal architecture that plays an important role in development. May regulate cellular and cytoskeletal architecture by modulating the spatial distribution of myosin II. The polypeptide is Protein Shroom4 (Shroom4) (Mus musculus (Mouse)).